The chain runs to 147 residues: Hemoglobin subunit beta (147 aa).

Residues 3 to 147 enclose the Globin domain; sequence HWTPEEKQYI…VAHALALGYH (145 aa). Residues His64 and His93 each coordinate heme b.

Belongs to the globin family. As to quaternary structure, heterotetramer of two alpha-D chains and two beta chains. As to expression, red blood cells.

Its function is as follows. Involved in oxygen transport from the lung to the various peripheral tissues. In Chelonoidis niger (Galapagos giant tortoise), this protein is Hemoglobin subunit beta (HBB).